Consider the following 347-residue polypeptide: NADH-ubiquinone oxidoreductase chain 2 (347 aa).

10 helical membrane passes run 1–21, 25–45, 59–79, 96–116, 148–168, 178–198, 200–220, 237–257, 274–294, and 326–346; these read MNPI…TIVM, HWLT…PMLM, YFLT…INLM, IILT…FWVP, IINL…GGWG, IMAY…IYNP, LTML…MLLI, MPLI…LPPL, NSII…YFYM, and LSPL…MMIL.

It belongs to the complex I subunit 2 family. As to quaternary structure, core subunit of respiratory chain NADH dehydrogenase (Complex I) which is composed of 45 different subunits. Interacts with TMEM242.

It is found in the mitochondrion inner membrane. It catalyses the reaction a ubiquinone + NADH + 5 H(+)(in) = a ubiquinol + NAD(+) + 4 H(+)(out). Its function is as follows. Core subunit of the mitochondrial membrane respiratory chain NADH dehydrogenase (Complex I) which catalyzes electron transfer from NADH through the respiratory chain, using ubiquinone as an electron acceptor. Essential for the catalytic activity and assembly of complex I. The protein is NADH-ubiquinone oxidoreductase chain 2 of Gardnerycteris crenulata (Striped hairy-nosed bat).